A 347-amino-acid polypeptide reads, in one-letter code: Protein RecA (347 aa).

Gly-65 to Thr-72 serves as a coordination point for ATP. The span at Lys-327 to Glu-336 shows a compositional bias: basic and acidic residues. Positions Lys-327 to Met-347 are disordered. The span at Glu-337 to Met-347 shows a compositional bias: acidic residues.

The protein belongs to the RecA family.

The protein resides in the cytoplasm. Can catalyze the hydrolysis of ATP in the presence of single-stranded DNA, the ATP-dependent uptake of single-stranded DNA by duplex DNA, and the ATP-dependent hybridization of homologous single-stranded DNAs. It interacts with LexA causing its activation and leading to its autocatalytic cleavage. This chain is Protein RecA, found in Xylella fastidiosa (strain M23).